A 74-amino-acid chain; its full sequence is U3-agatoxin-Ao1g (74 aa).

Positions 1–20 are cleaved as a signal peptide; the sequence is MRAIISLLLISTMVFGVIEA. A propeptide spanning residues 21 to 34 is cleaved from the precursor; that stretch reads VSVEEGLKIFEGER. 4 disulfides stabilise this stretch: C37/C53, C44/C58, C52/C68, and C60/C66. N72 is modified (asparagine amide).

This sequence belongs to the neurotoxin 07 (Beta/delta-agtx) family. 03 (aga-4) subfamily. Aga sub-subfamily. As to expression, expressed by the venom gland.

It localises to the secreted. Its function is as follows. Insecticidal neurotoxin that modulates the insect Nav channel (DmNaV1/tipE (para/tipE)) in a unique manner, with both the activation and inactivation processes being affected. The voltage dependence of activation is shifted toward more hyperpolarized potentials (analogous to site 4 toxins) and a non-inactivating persistent sodium current is induced (site 3-like action). Interestingly, both effects take place in a voltage-dependent manner, producing a bell-shaped curve between -80 and 0 mV. The chain is U3-agatoxin-Ao1g from Agelena orientalis (Funnel-web spider).